A 374-amino-acid polypeptide reads, in one-letter code: N-acetyldiaminopimelate deacetylase (374 aa).

Aspartate 68 is a catalytic residue. Residue glutamate 127 is the Proton acceptor of the active site.

Belongs to the peptidase M20A family. N-acetyldiaminopimelate deacetylase subfamily.

It carries out the reaction N-acetyl-(2S,6S)-2,6-diaminopimelate + H2O = (2S,6S)-2,6-diaminopimelate + acetate. The protein operates within amino-acid biosynthesis; L-lysine biosynthesis via DAP pathway; LL-2,6-diaminopimelate from (S)-tetrahydrodipicolinate (acetylase route): step 3/3. In terms of biological role, catalyzes the conversion of N-acetyl-diaminopimelate to diaminopimelate and acetate. This Shouchella clausii (strain KSM-K16) (Alkalihalobacillus clausii) protein is N-acetyldiaminopimelate deacetylase.